A 147-amino-acid polypeptide reads, in one-letter code: Myosin regulatory light chain (147 aa).

The residue at position 1 (T1) is an N-acetylthreonine. 3 EF-hand domains span residues 2 to 37 (ASAD…LGKN), 73 to 108 (EQSK…LGDA), and 109 to 144 (LTSS…GYPL). Residues D15, D17, D19, K21, E26, D86, N90, T92, and E97 each contribute to the Ca(2+) site.

The polypeptide is Myosin regulatory light chain (Physarum polycephalum (Slime mold)).